Here is a 348-residue protein sequence, read N- to C-terminus: MTDLPFVTADLPGSGGALRRAPEDFRVDEVPAYLPSGAGPHLYLRVEKRGRTSRDAVRELARALGVPERDAGCAGLKDKDAVTTQWLSFPVARDPDPAALAAPGLRVLEASRHQNKLRTGHVRANRFTLAVRGGDLGRARECAGALAARGLPNFFGPQRFGAAGRNAAVGRALVTGERTPEAGRAARDRFLRRLSLSAYQSLLFNRWLAERMADGLFAAALAGDAMKKLDTGGLFTCEDPAADGPRVERFEISPAGPMFGHALRLAAGEAGAREARLLEAEGIALADFARGGGEAEGTRRAARLRVEVALEPLEDGYRAAFELPRGAYATVVMRELTKGEAELPEDAD.

The active-site Nucleophile is the aspartate 78. Residues 150–304 (GLPNFFGPQR…AEGTRRAARL (155 aa)) form the TRUD domain.

The protein belongs to the pseudouridine synthase TruD family.

The enzyme catalyses uridine(13) in tRNA = pseudouridine(13) in tRNA. Functionally, responsible for synthesis of pseudouridine from uracil-13 in transfer RNAs. This Anaeromyxobacter dehalogenans (strain 2CP-1 / ATCC BAA-258) protein is tRNA pseudouridine synthase D.